The following is a 137-amino-acid chain: Large ribosomal subunit protein uL16 (137 aa).

It belongs to the universal ribosomal protein uL16 family. Part of the 50S ribosomal subunit.

Functionally, binds 23S rRNA and is also seen to make contacts with the A and possibly P site tRNAs. The protein is Large ribosomal subunit protein uL16 of Cellvibrio japonicus (strain Ueda107) (Pseudomonas fluorescens subsp. cellulosa).